A 376-amino-acid polypeptide reads, in one-letter code: Cobalt-precorrin-5B C(1)-methyltransferase (376 aa).

The protein belongs to the CbiD family.

It carries out the reaction Co-precorrin-5B + S-adenosyl-L-methionine = Co-precorrin-6A + S-adenosyl-L-homocysteine. The protein operates within cofactor biosynthesis; adenosylcobalamin biosynthesis; cob(II)yrinate a,c-diamide from sirohydrochlorin (anaerobic route): step 6/10. Catalyzes the methylation of C-1 in cobalt-precorrin-5B to form cobalt-precorrin-6A. In Bradyrhizobium sp. (strain BTAi1 / ATCC BAA-1182), this protein is Cobalt-precorrin-5B C(1)-methyltransferase.